Here is a 471-residue protein sequence, read N- to C-terminus: 6-phosphofructo-2-kinase/fructose-2,6-bisphosphatase 1 (471 aa).

Ser-2 carries the post-translational modification N-acetylserine. The interval 2–250 (SREMGELTQT…AYYLMNIHVT (249 aa)) is 6-phosphofructo-2-kinase. Ser-33 bears the Phosphoserine; by PKA mark. 49 to 57 (GLPARGKTY) is a binding site for ATP. Beta-D-fructose 6-phosphate contacts are provided by Arg-82 and Arg-105. The active site involves Asp-131. Beta-D-fructose 6-phosphate is bound by residues Thr-133 and Arg-139. A Phosphoserine modification is found at Ser-141. Residue Cys-161 is part of the active site. Position 170–175 (170–175 (NIKQVK)) interacts with ATP. Residues Lys-175, Arg-196, and Tyr-200 each contribute to the beta-D-fructose 6-phosphate site. The interval 251–471 (PRSIYLCRHG…EALDTVPAHY (221 aa)) is fructose-2,6-bisphosphatase. Arg-258 serves as a coordination point for beta-D-fructose 2,6-bisphosphate. The Tele-phosphohistidine intermediate role is filled by His-259. Residues Asn-265, Gly-271, and Arg-308 each contribute to the beta-D-fructose 2,6-bisphosphate site. The Proton donor/acceptor role is filled by Glu-328. Positions 339, 353, 357, 368, 394, and 398 each coordinate beta-D-fructose 2,6-bisphosphate. ATP is bound at residue 350 to 353 (FALR). ATP-binding positions include 394–398 (QAVMR) and Tyr-430.

It in the C-terminal section; belongs to the phosphoglycerate mutase family. As to quaternary structure, homodimer. In terms of tissue distribution, liver.

It catalyses the reaction beta-D-fructose 2,6-bisphosphate + H2O = beta-D-fructose 6-phosphate + phosphate. The enzyme catalyses beta-D-fructose 6-phosphate + ATP = beta-D-fructose 2,6-bisphosphate + ADP + H(+). Its activity is regulated as follows. Phosphorylation at Ser-33 inhibits the kinase and activates the bisphosphatase. Synthesis and degradation of fructose 2,6-bisphosphate. This Rattus norvegicus (Rat) protein is 6-phosphofructo-2-kinase/fructose-2,6-bisphosphatase 1.